We begin with the raw amino-acid sequence, 702 residues long: Ribosomal RNA large subunit methyltransferase K/L (702 aa).

The region spanning leucine 43–leucine 154 is the THUMP domain.

It belongs to the methyltransferase superfamily. RlmKL family.

Its subcellular location is the cytoplasm. The catalysed reaction is guanosine(2445) in 23S rRNA + S-adenosyl-L-methionine = N(2)-methylguanosine(2445) in 23S rRNA + S-adenosyl-L-homocysteine + H(+). It catalyses the reaction guanosine(2069) in 23S rRNA + S-adenosyl-L-methionine = N(2)-methylguanosine(2069) in 23S rRNA + S-adenosyl-L-homocysteine + H(+). Its function is as follows. Specifically methylates the guanine in position 2445 (m2G2445) and the guanine in position 2069 (m7G2069) of 23S rRNA. This chain is Ribosomal RNA large subunit methyltransferase K/L, found in Escherichia coli (strain K12 / DH10B).